Reading from the N-terminus, the 518-residue chain is Membrane-bound lytic murein transglycosylase F (518 aa).

An N-terminal signal peptide occupies residues 1 to 21 (MKKLKINYLFIGILALLLAVA). A non-LT domain region spans residues 22-269 (LWPSIPWFGK…RIEEKYLGHG (248 aa)). Positions 270–518 (DDFDYVDTRT…SRKGSEEKQN (249 aa)) are LT domain. E314 is an active-site residue.

The protein in the N-terminal section; belongs to the bacterial solute-binding protein 3 family. It in the C-terminal section; belongs to the transglycosylase Slt family.

Its subcellular location is the cell outer membrane. The catalysed reaction is Exolytic cleavage of the (1-&gt;4)-beta-glycosidic linkage between N-acetylmuramic acid (MurNAc) and N-acetylglucosamine (GlcNAc) residues in peptidoglycan, from either the reducing or the non-reducing ends of the peptidoglycan chains, with concomitant formation of a 1,6-anhydrobond in the MurNAc residue.. Functionally, murein-degrading enzyme that degrades murein glycan strands and insoluble, high-molecular weight murein sacculi, with the concomitant formation of a 1,6-anhydromuramoyl product. Lytic transglycosylases (LTs) play an integral role in the metabolism of the peptidoglycan (PG) sacculus. Their lytic action creates space within the PG sacculus to allow for its expansion as well as for the insertion of various structures such as secretion systems and flagella. The chain is Membrane-bound lytic murein transglycosylase F from Escherichia coli O6:K15:H31 (strain 536 / UPEC).